The following is a 393-amino-acid chain: MQFDNIDSALMALKNGETIIVVDDENRENEGDLVAVTEWMNDNTINFMAKEARGLICAPVSKDIAQRLDLVQMVDDNSDIFGTQFTVSIDHVDTTTGISAYERTLTAKKLIDPSSEAKDFNRPGHLFPLVAQDKGVLARNGHTEAAVDLAKLTGAKPAGVICEIMNDDGTMAKGQDLQKFKEKHQLKMITIDDLIEYRKKLEPEIEFKAKVKMPTDFGTFDMYGFKATYTDEEIVVLTKGAIRQHENVRLHSACLTGDIFHSQRCDCGAQLESSMKYINEHGGMIIYLPQEGRGIGLLNKLRAYELIEQGYDTVTANLALGFDEDLRDYHIAAQILKYFNIEHINLLSNNPSKFEGLKQYGIDIAERIEVIVPETVHNHDYMETKKIKMGHLI.

The DHBP synthase stretch occupies residues 1–200 (MQFDNIDSAL…IDDLIEYRKK (200 aa)). D-ribulose 5-phosphate is bound by residues 27–28 (RE), Asp32, 139–143 (RNGHT), and Glu163. Glu28 is a binding site for Mg(2+). His142 lines the Mg(2+) pocket. Residues 201 to 393 (LEPEIEFKAK…TKKIKMGHLI (193 aa)) form a GTP cyclohydrolase II region. 249 to 253 (RLHSA) contributes to the GTP binding site. Residues Cys254, Cys265, and Cys267 each coordinate Zn(2+). Residues Gln270, 291–293 (EGR), and Thr313 each bind GTP. The Proton acceptor; for GTP cyclohydrolase activity role is filled by Asp325. Arg327 acts as the Nucleophile; for GTP cyclohydrolase activity in catalysis. Positions 348 and 353 each coordinate GTP.

It in the N-terminal section; belongs to the DHBP synthase family. This sequence in the C-terminal section; belongs to the GTP cyclohydrolase II family. Requires Mg(2+) as cofactor. Mn(2+) serves as cofactor. The cofactor is Zn(2+).

It carries out the reaction D-ribulose 5-phosphate = (2S)-2-hydroxy-3-oxobutyl phosphate + formate + H(+). The enzyme catalyses GTP + 4 H2O = 2,5-diamino-6-hydroxy-4-(5-phosphoribosylamino)-pyrimidine + formate + 2 phosphate + 3 H(+). Its pathway is cofactor biosynthesis; riboflavin biosynthesis; 2-hydroxy-3-oxobutyl phosphate from D-ribulose 5-phosphate: step 1/1. It participates in cofactor biosynthesis; riboflavin biosynthesis; 5-amino-6-(D-ribitylamino)uracil from GTP: step 1/4. In terms of biological role, catalyzes the conversion of D-ribulose 5-phosphate to formate and 3,4-dihydroxy-2-butanone 4-phosphate. Catalyzes the conversion of GTP to 2,5-diamino-6-ribosylamino-4(3H)-pyrimidinone 5'-phosphate (DARP), formate and pyrophosphate. The polypeptide is Riboflavin biosynthesis protein RibBA (Staphylococcus aureus (strain MSSA476)).